The primary structure comprises 191 residues: Ribosomal RNA large subunit methyltransferase E (191 aa).

Residues Gly-49, Trp-51, Asp-66, Asp-82, and Asp-105 each contribute to the S-adenosyl-L-methionine site. The active-site Proton acceptor is Lys-145.

Belongs to the class I-like SAM-binding methyltransferase superfamily. RNA methyltransferase RlmE family.

The protein resides in the cytoplasm. The enzyme catalyses uridine(2552) in 23S rRNA + S-adenosyl-L-methionine = 2'-O-methyluridine(2552) in 23S rRNA + S-adenosyl-L-homocysteine + H(+). Functionally, specifically methylates the uridine in position 2552 of 23S rRNA at the 2'-O position of the ribose in the fully assembled 50S ribosomal subunit. The sequence is that of Ribosomal RNA large subunit methyltransferase E from Archaeoglobus fulgidus (strain ATCC 49558 / DSM 4304 / JCM 9628 / NBRC 100126 / VC-16).